The chain runs to 224 residues: Synaptogyrin-2 (224 aa).

M1 carries the N-acetylmethionine modification. A Phosphoserine modification is found at S3. The MARVEL domain occupies 20 to 171 (FLSQPQVVTR…LASLAYQRYK (152 aa)). The next 4 membrane-spanning stretches (helical) occupy residues 31 to 51 (VSMV…YTNI), 72 to 92 (SAIG…DAFF), 105 to 125 (VIGD…GFCF), and 147 to 167 (AAIT…SLAY).

It belongs to the synaptogyrin family. In terms of processing, may be tyrosine phosphorylated by Src.

The protein resides in the cytoplasmic vesicle membrane. Its subcellular location is the cytoplasmic vesicle. The protein localises to the secretory vesicle. It is found in the synaptic vesicle membrane. In terms of biological role, may play a role in regulated exocytosis. In neuronal cells, modulates the localization of synaptophysin/SYP into synaptic-like microvesicles and may therefore play a role in the formation and/or the maturation of this vesicles. May also play a role in GLUT4 storage and transport to the plasma membrane. This chain is Synaptogyrin-2, found in Mus musculus (Mouse).